The chain runs to 62 residues: Conotoxin Sr5.6 (62 aa).

Residues 1–22 (MRCLPVFVILLLLIASASSVDA) form the signal peptide. A propeptide spanning residues 23–44 (QLKTKDDVPLTSVHDNAKGTQH) is cleaved from the precursor. Position 61 is a proline amide (Pro61).

This sequence belongs to the conotoxin T superfamily. Post-translationally, contains 2 disulfide bonds that can be either 'C1-C3, C2-C4' or 'C1-C4, C2-C3', since these disulfide connectivities have been observed for conotoxins with cysteine framework V (for examples, see AC P0DQQ7 and AC P81755). In terms of tissue distribution, expressed by the venom duct.

The protein resides in the secreted. The protein is Conotoxin Sr5.6 of Conus spurius (Alphabet cone).